Reading from the N-terminus, the 104-residue chain is L-rhamnose mutarotase (104 aa).

Y18 is a substrate binding site. H22 serves as the catalytic Proton donor. Residues Y41 and 76-77 each bind substrate; that span reads WW.

This sequence belongs to the rhamnose mutarotase family. Homodimer.

The protein localises to the cytoplasm. It carries out the reaction alpha-L-rhamnose = beta-L-rhamnose. It participates in carbohydrate metabolism; L-rhamnose metabolism. In terms of biological role, involved in the anomeric conversion of L-rhamnose. The protein is L-rhamnose mutarotase of Tolumonas auensis (strain DSM 9187 / NBRC 110442 / TA 4).